The chain runs to 189 residues: Inner membrane-spanning protein YciB (189 aa).

5 consecutive transmembrane segments (helical) span residues 3-23 (LLID…WGIY), 47-67 (IEPM…ATLL), 76-96 (WKPT…QLFF), 121-141 (WSWT…AHAF), and 149-169 (FKLF…ALYL).

This sequence belongs to the YciB family.

It localises to the cell inner membrane. In terms of biological role, plays a role in cell envelope biogenesis, maintenance of cell envelope integrity and membrane homeostasis. The polypeptide is Inner membrane-spanning protein YciB (Paracidovorax citrulli (strain AAC00-1) (Acidovorax citrulli)).